The following is a 498-amino-acid chain: Cytochrome P450 71B31 (498 aa).

Residues 3–23 traverse the membrane as a helical segment; it reads MFLGLLFLFPLFFILFKNLLP. Residue cysteine 441 coordinates heme.

It belongs to the cytochrome P450 family. It depends on heme as a cofactor.

Its subcellular location is the membrane. This Arabidopsis thaliana (Mouse-ear cress) protein is Cytochrome P450 71B31 (CYP71B31).